The chain runs to 77 residues: Tautomerase PptA (77 aa).

The Proton acceptor; via imino nitrogen role is filled by P2.

It belongs to the 4-oxalocrotonate tautomerase family. PptA subfamily. In terms of assembly, homodimer.

Its subcellular location is the cytoplasm. In Escherichia coli (strain K12 / MC4100 / BW2952), this protein is Tautomerase PptA.